We begin with the raw amino-acid sequence, 330 residues long: Clp protease adapter protein ClpF, chloroplastic (330 aa).

The N-terminal 65 residues, 1–65, are a transit peptide targeting the chloroplast; that stretch reads MVQSQSLSTL…KSLKQRNLLR (65 aa). Positions 66 to 138 are NTD, required for CLPS1-binding; the sequence is VEARWPFQGG…VEEESIRLQE (73 aa). 2 coiled-coil regions span residues 112–139 and 175–195; these read NLEQ…LQEG and AAKL…VSAK. A UVR domain is found at 153-188; that stretch reads GISIIRLRADLQNAIDSEDYGLAAKLRDEISKLEAE. The interval 203–310 is yccV-like; sequence EYAFRLGQKL…TAGDFIPVKQ (108 aa).

Binds to CLPC1 and CLPC2. Interacts with ClpS1; this interaction stimulates their association with ClpC. Associates with the Clp substrate HEMA1 (GluTR). Expressed constitutively in photosynthetic tissues such as leaves, stems and flowers, and, at low levels, in siliques.

The protein localises to the plastid. Its subcellular location is the chloroplast. Functionally, clp protease adapter that facilitates CLPS1 recruitment to ClpC chaperones thus forming a binary adapter for selective substrate recognition and delivery to plastid Clp protease system (CLPC). This is Clp protease adapter protein ClpF, chloroplastic from Arabidopsis thaliana (Mouse-ear cress).